Consider the following 143-residue polypeptide: Large-conductance mechanosensitive channel (143 aa).

The next 2 helical transmembrane spans lie at 10 to 30 and 89 to 109; these read FAVKGNVMDLAIGVIIGGAFS and GSFITVLINFIILAFIIFLMV.

Belongs to the MscL family. As to quaternary structure, homopentamer.

The protein resides in the cell inner membrane. Its function is as follows. Channel that opens in response to stretch forces in the membrane lipid bilayer. May participate in the regulation of osmotic pressure changes within the cell. The polypeptide is Large-conductance mechanosensitive channel (Burkholderia pseudomallei (strain 668)).